Consider the following 385-residue polypeptide: Glutamate 5-kinase (385 aa).

Lys17 is a binding site for ATP. Residues Ser64, Asp151, and Asn165 each contribute to the substrate site. 185–186 (SD) contributes to the ATP binding site. Residues 291–367 (SGTVRVDAGA…NQIDNILGYN (77 aa)) enclose the PUA domain.

The protein belongs to the glutamate 5-kinase family.

It localises to the cytoplasm. It catalyses the reaction L-glutamate + ATP = L-glutamyl 5-phosphate + ADP. The protein operates within amino-acid biosynthesis; L-proline biosynthesis; L-glutamate 5-semialdehyde from L-glutamate: step 1/2. In terms of biological role, catalyzes the transfer of a phosphate group to glutamate to form L-glutamate 5-phosphate. The chain is Glutamate 5-kinase from Methanosarcina acetivorans (strain ATCC 35395 / DSM 2834 / JCM 12185 / C2A).